A 554-amino-acid polypeptide reads, in one-letter code: Gamma-aminobutyric acid receptor subunit alpha-4 (554 aa).

An N-terminal signal peptide occupies residues 1-35; the sequence is MVSAKKVPAIALSAGVSFALLRFLCLAVCLNESPG. The Extracellular segment spans residues 36-259; sequence QNQKEEKLCT…FHLRRKMGYF (224 aa). An N-linked (GlcNAc...) asparagine glycan is attached at N47. 4-aminobutanoate is bound at residue R100. N-linked (GlcNAc...) asparagine glycosylation is found at N144 and N157. T163 lines the 4-aminobutanoate pocket. C172 and C186 are joined by a disulfide. Residues 260–280 form a helical membrane-spanning segment; sequence MIQTYIPCIMTVILSQVSFWI. At 281–284 the chain is on the cytoplasmic side; that stretch reads NKES. Residues 285–305 form a helical membrane-spanning segment; it reads VPARTVFGITTVLTMTTLSIS. Residues 306 to 318 lie on the Extracellular side of the membrane; sequence ARHSLPKVSYATA. The chain crosses the membrane as a helical span at residues 319-341; sequence MDWFIAVCFAFVFSALIEFAAVN. The Cytoplasmic segment spans residues 342 to 517; it reads YFTNIQMEKA…PPPSGSGTSK (176 aa). Disordered regions lie at residues 350-381, 397-435, 452-471, and 495-515; these read KAKR…QNTN, ESDV…SPNP, PSAS…ASVG, and ATGK…GSGT. The segment covering 410–422 has biased composition (low complexity); it reads SSKSSTVVQESSK. Pro residues predominate over residues 502-511; the sequence is TPPPSAPPPS. The chain crosses the membrane as a helical span at residues 518–540; it reads IDKYARILFPVTFGAFNMVYWVV. The Extracellular portion of the chain corresponds to 541–554; sequence YLSKDTMEKSESLM.

It belongs to the ligand-gated ion channel (TC 1.A.9) family. Gamma-aminobutyric acid receptor (TC 1.A.9.5) subfamily. GABRA4 sub-subfamily. In terms of assembly, heteropentamer, formed by a combination of alpha (GABRA1-6), beta (GABRB1-3), gamma (GABRG1-3), delta (GABRD), epsilon (GABRE), rho (GABRR1-3), pi (GABRP) and theta (GABRQ) chains, each subunit exhibiting distinct physiological and pharmacological properties. In terms of tissue distribution, expressed in the brain.

It is found in the cell membrane. The protein localises to the postsynaptic cell membrane. It carries out the reaction chloride(in) = chloride(out). With respect to regulation, potentiated by histamine. Functionally, alpha subunit of the heteropentameric ligand-gated chloride channel gated by gamma-aminobutyric acid (GABA), a major inhibitory neurotransmitter in the brain. GABA-gated chloride channels, also named GABA(A) receptors (GABAAR), consist of five subunits arranged around a central pore and contain GABA active binding site(s) located at the alpha and beta subunit interface(s). When activated by GABA, GABAARs selectively allow the flow of chloride anions across the cell membrane down their electrochemical gradient. GABAARs containing alpha-4 are predominantly extrasynaptic, contributing to tonic inhibition in dentate granule cells and thalamic relay neurons. Extrasynaptic alpha-4-containing GABAARs control levels of excitability and network activity. GABAAR containing alpha-4-beta-3-delta subunits can simultaneously bind GABA and histamine where histamine binds at the interface of two neighboring beta subunits, which may be involved in the regulation of sleep and wakefulness. This Homo sapiens (Human) protein is Gamma-aminobutyric acid receptor subunit alpha-4.